Reading from the N-terminus, the 363-residue chain is Putative replication factor C small subunit L510 (363 aa).

47 to 54 (GPPGTGKT) provides a ligand contact to ATP.

This sequence belongs to the activator 1 small subunits family. RfcS subfamily.

Part of the RFC clamp loader complex which loads the PCNA sliding clamp onto DNA. This Acanthamoeba polyphaga mimivirus (APMV) protein is Putative replication factor C small subunit L510.